The sequence spans 752 residues: Photosystem I P700 chlorophyll a apoprotein A1 (752 aa).

8 consecutive transmembrane segments (helical) span residues 73 to 96 (IFSA…FHGA), 159 to 182 (LYWI…FHYH), 198 to 222 (MNHH…HVAL), 294 to 312 (IAHH…GHMY), 349 to 372 (WHAQ…HHMY), 388 to 414 (LSLF…IFMV), 436 to 458 (SIIA…FYIH), and 533 to 551 (FMVH…LILL). The [4Fe-4S] cluster site is built by Cys575 and Cys584. Transmembrane regions (helical) follow at residues 591–612 (HVFL…HFSW) and 666–688 (ASAY…MFLF). His677 contributes to the chlorophyll a' binding site. Chlorophyll a contacts are provided by Met685 and Tyr693. Position 694 (Trp694) interacts with phylloquinone. Residues 726–746 (AVGLAHYLLGGIGTTWAFFLA) traverse the membrane as a helical segment.

The protein belongs to the PsaA/PsaB family. As to quaternary structure, the PsaA/B heterodimer binds the P700 chlorophyll special pair and subsequent electron acceptors. PSI consists of a core antenna complex that captures photons, and an electron transfer chain that converts photonic excitation into a charge separation. The eukaryotic PSI reaction center is composed of at least 11 subunits. P700 is a chlorophyll a/chlorophyll a' dimer, A0 is one or more chlorophyll a, A1 is one or both phylloquinones and FX is a shared 4Fe-4S iron-sulfur center. is required as a cofactor.

It localises to the plastid. The protein resides in the chloroplast thylakoid membrane. The enzyme catalyses reduced [plastocyanin] + hnu + oxidized [2Fe-2S]-[ferredoxin] = oxidized [plastocyanin] + reduced [2Fe-2S]-[ferredoxin]. Functionally, psaA and PsaB bind P700, the primary electron donor of photosystem I (PSI), as well as the electron acceptors A0, A1 and FX. PSI is a plastocyanin/cytochrome c6-ferredoxin oxidoreductase, converting photonic excitation into a charge separation, which transfers an electron from the donor P700 chlorophyll pair to the spectroscopically characterized acceptors A0, A1, FX, FA and FB in turn. Oxidized P700 is reduced on the lumenal side of the thylakoid membrane by plastocyanin or cytochrome c6. The polypeptide is Photosystem I P700 chlorophyll a apoprotein A1 (Phaeodactylum tricornutum (strain CCAP 1055/1)).